The following is a 405-amino-acid chain: Dematin (405 aa).

Disordered regions lie at residues 1 to 29 (MERL…SPSS), 81 to 100 (SREC…PEVW), and 108 to 332 (IISQ…DRGN). Low complexity predominate over residues 11–29 (SPGSVSSSRDSSVPGSPSS). A phosphoserine mark is found at Ser16, Ser18, Ser26, Ser92, Ser96, Ser110, and Ser113. Residues 113–124 (STPRTTGTPRTS) show a composition bias toward low complexity. Thr114 is subject to Phosphothreonine. Ser156 and Ser226 each carry phosphoserine. The span at 216–228 (EEEEEEEDDDSEE) shows a compositional bias: acidic residues. The tract at residues 224–308 (DDSEEEIKAI…SRLQSTEFSP (85 aa)) is interaction with RASGRF2. Composition is skewed to basic and acidic residues over residues 229–242 (EIKA…EELS) and 252–261 (ILKEEMEKSL). Ser269, Ser279, Ser289, Ser303, Ser315, Ser333, Ser372, and Ser383 each carry phosphoserine. Positions 277–292 (HTSLHSGTSKSSSLPS) are enriched in low complexity. The segment covering 294–322 (GRTTLSRLQSTEFSPSGSEAGSPGLQNGE) has biased composition (polar residues). In terms of domain architecture, HP spans 337–405 (VLEQKIYPYE…NELKKKASLF (69 aa)). Ser403 bears the Phosphoserine; by PKA mark.

Belongs to the villin/gelsolin family. As to quaternary structure, monomeric (isoform 2); under reducing conditions. Self-associates. Exists under oxidizing condition as a trimer of two isoforms 2 and isoform 1 linked by disulfide bonds. Found in a complex with DMTN, F-actin and spectrin. Found in a complex with ADD2, DMTN and SLC2A1. Interacts with F-actin, ITPKB and spectrin. Isoform 2 interacts with SLC2A1 (via C-terminus cytoplasmic region). Interacts with RASGRF2. Post-translationally, phosphorylated. Phosphorylation at Ser-403 by PKA causes the C-terminal headpiece domain to associate with the N-terminal core domain, and leads to the inhibition of its actin bundling activity. Expressed in platelets. Isoform 1 and isoform 2 are expressed in mature erythrocytes (at protein level).

It localises to the cytoplasm. The protein localises to the cytosol. It is found in the perinuclear region. Its subcellular location is the cytoskeleton. The protein resides in the cell membrane. It localises to the membrane. The protein localises to the endomembrane system. It is found in the cell projection. In terms of biological role, membrane-cytoskeleton-associated protein with F-actin-binding activity that induces F-actin bundles formation and stabilization. Its F-actin-bundling activity is reversibly regulated upon its phosphorylation by the cAMP-dependent protein kinase A (PKA). Binds to the erythrocyte membrane glucose transporter-1 SLC2A1/GLUT1, and hence stabilizes and attaches the spectrin-actin network to the erythrocytic plasma membrane. Plays a role in maintaining the functional integrity of PKA-activated erythrocyte shape and the membrane mechanical properties. Also plays a role as a modulator of actin dynamics in fibroblasts; acts as a negative regulator of the RhoA activation pathway. In platelets, functions as a regulator of internal calcium mobilization across the dense tubular system that affects platelet granule secretion pathways and aggregation. Also required for the formation of a diverse set of cell protrusions, such as filopodia and lamellipodia, necessary for platelet cell spreading, motility and migration. Acts as a tumor suppressor and inhibits malignant cell transformation. This chain is Dematin (Dmtn), found in Mus musculus (Mouse).